The following is a 506-amino-acid chain: Dipeptide and tripeptide permease A (506 aa).

Over 1 to 36 (MSTANNNSESTESVSMNAFKQPKAFYLIFSIELWER) the chain is Cytoplasmic. The chain crosses the membrane as a helical span at residues 37-57 (FGYYGLQGIMAVYLVKMLGMS). The Periplasmic portion of the chain corresponds to 58 to 61 (ETDS). Residues 62–82 (ITLFSSFSALVYGFVAIGGWL) form a helical membrane-spanning segment. Topologically, residues 83–91 (GDKVLGTKR) are cytoplasmic. The next 2 helical transmembrane spans lie at 92–112 (VIVLGAIVLAIGYTMIAYSGH) and 113–133 (SVAWVYIGMATIAVGNGLFKA). Residues 134–155 (NPSALLSTCYAKDDPRLDGAFT) lie on the Cytoplasmic side of the membrane. Residues 156-176 (MYYMAVNIGSFFSMLATPVLA) traverse the membrane as a helical segment. The Periplasmic portion of the chain corresponds to 177–180 (ANYG). The chain crosses the membrane as a helical span at residues 181 to 201 (WSVAFSLSVVGMILTLVNFMF). Over 202-222 (CRKWVSTQGSQPDFQPINLKK) the chain is Cytoplasmic. Residues 223 to 243 (LVITLAGIVVLVALSTWLLHN) traverse the membrane as a helical segment. The Periplasmic portion of the chain corresponds to 244–248 (QGVAR). The chain crosses the membrane as a helical span at residues 249 to 269 (WILTIISLAVVAIFIKEMLAV). Residues 270–276 (SGAERRK) lie on the Cytoplasmic side of the membrane. A helical transmembrane segment spans residues 277-297 (MIVALLLMLEAVVFFVLYNQM). The Periplasmic segment spans residues 298-322 (PTSLNFFAIRNVEHSILGFAFEPEQ). A helical membrane pass occupies residues 323–343 (YQALNPFWIMVASPLLAAVYN). Residues 344–354 (KMGDQLPMAHK) lie on the Cytoplasmic side of the membrane. Residues 355–375 (FAIGMVLCSGAFLVLPWGASM) traverse the membrane as a helical segment. Residues 376 to 385 (ANEQGIVSVN) are Periplasmic-facing. A helical transmembrane segment spans residues 386–406 (WLILCYGLQSIGELMISGLGL). Residues 407–416 (AMVAQLVPQR) are Cytoplasmic-facing. Residues 417-437 (LMGFIMGAWFLTSAGAAIIAG) traverse the membrane as a helical segment. The Periplasmic segment spans residues 438-461 (YVANMMAVPENVVDPHVSLEVYSN). The helical transmembrane segment at 462–482 (VFMQIGIVTGIIAVLMMLTAP) threads the bilayer. The Cytoplasmic portion of the chain corresponds to 483–506 (KLTRMTQDVATDVPADAATTTASA).

Belongs to the major facilitator superfamily. Proton-dependent oligopeptide transporter (POT/PTR) (TC 2.A.17) family. DtpA subfamily.

The protein resides in the cell inner membrane. In terms of biological role, proton-dependent permease that transports di- and tripeptides. This Pectobacterium carotovorum subsp. carotovorum (strain PC1) protein is Dipeptide and tripeptide permease A.